The following is a 92-amino-acid chain: MNKSELINIISKKSNLSKIQIKNILEITLTAIIQSLKDGNSVQLVGFGTFKVNNRAARIGRNPQTGQTIHISATKTPVFISGKTFKTAIKTI.

It belongs to the bacterial histone-like protein family. As to quaternary structure, homodimer.

In terms of biological role, histone-like DNA-binding protein which is capable of wrapping DNA to stabilize it, and thus to prevent its denaturation under extreme environmental conditions. The polypeptide is DNA-binding protein HU (hup) (Buchnera aphidicola subsp. Baizongia pistaciae (strain Bp)).